Reading from the N-terminus, the 219-residue chain is Phosphatidylserine decarboxylase proenzyme (219 aa).

The active-site Schiff-base intermediate with substrate; via pyruvic acid is the serine 188. Position 188 is a pyruvic acid (Ser); by autocatalysis (serine 188).

Belongs to the phosphatidylserine decarboxylase family. PSD-A subfamily. Heterodimer of a large membrane-associated beta subunit and a small pyruvoyl-containing alpha subunit. Pyruvate is required as a cofactor. Is synthesized initially as an inactive proenzyme. Formation of the active enzyme involves a self-maturation process in which the active site pyruvoyl group is generated from an internal serine residue via an autocatalytic post-translational modification. Two non-identical subunits are generated from the proenzyme in this reaction, and the pyruvate is formed at the N-terminus of the alpha chain, which is derived from the carboxyl end of the proenzyme. The post-translation cleavage follows an unusual pathway, termed non-hydrolytic serinolysis, in which the side chain hydroxyl group of the serine supplies its oxygen atom to form the C-terminus of the beta chain, while the remainder of the serine residue undergoes an oxidative deamination to produce ammonia and the pyruvoyl prosthetic group on the alpha chain.

Its subcellular location is the cell membrane. It carries out the reaction a 1,2-diacyl-sn-glycero-3-phospho-L-serine + H(+) = a 1,2-diacyl-sn-glycero-3-phosphoethanolamine + CO2. It participates in phospholipid metabolism; phosphatidylethanolamine biosynthesis; phosphatidylethanolamine from CDP-diacylglycerol: step 2/2. Functionally, catalyzes the formation of phosphatidylethanolamine (PtdEtn) from phosphatidylserine (PtdSer). The polypeptide is Phosphatidylserine decarboxylase proenzyme (Citrifermentans bemidjiense (strain ATCC BAA-1014 / DSM 16622 / JCM 12645 / Bem) (Geobacter bemidjiensis)).